The primary structure comprises 169 residues: Anaerobic nitrite reductase NSHB2 (169 aa).

One can recognise a Globin domain in the interval 16–166 (SFSEEQEALV…LVAAIKQEMK (151 aa)). A Homodimerization motif is present at residues 49–53 (EVAPS). Heme b is bound by residues Ser-59, Lys-73, His-77, Arg-107, Thr-111, and His-112. The short motif at 119–131 (DAHFEVTRFALLE) is the Homodimerization element.

Belongs to the plant globin family. In terms of assembly, homodimer. It depends on heme b as a cofactor. In terms of tissue distribution, expressed in leaves, but not in roots. Present in embryonic organs including embryos, coleoptiles and seminal roots.

The protein localises to the cytoplasm. Its subcellular location is the nucleus. The catalysed reaction is Fe(III)-heme b-[protein] + nitric oxide + H2O = Fe(II)-heme b-[protein] + nitrite + 2 H(+). Its function is as follows. Phytoglobin that reduces nitrite to nitric oxide under anoxic conditions (e.g. during flooding or in waterlogged soil). May not function as an oxygen storage or transport protein. Has an unusually high affinity for O(2) through an hexacoordinate heme iron because of a very low dissociation constant. Promotes tolerance to low potassium K(+) conditions. The protein is Anaerobic nitrite reductase NSHB2 of Oryza sativa subsp. japonica (Rice).